A 1025-amino-acid polypeptide reads, in one-letter code: Probable beta-galactosidase B (1025 aa).

Positions 1–21 (MATAFWLLLFLLGSLHVLTAA) are cleaved as a signal peptide. The N-linked (GlcNAc...) asparagine glycan is linked to Asn-23. Residue Tyr-90 coordinates substrate. Residue Asn-100 is glycosylated (N-linked (GlcNAc...) asparagine). Positions 135, 136, 137, and 195 each coordinate substrate. Glu-196 serves as the catalytic Proton donor. A glycan (N-linked (GlcNAc...) asparagine) is linked at Asn-211. Substrate is bound at residue Tyr-265. The cysteines at positions 271 and 324 are disulfide-linked. Residue Glu-308 is the Nucleophile of the active site. Tyr-373 lines the substrate pocket. N-linked (GlcNAc...) asparagine glycans are attached at residues Asn-411, Asn-456, Asn-736, Asn-776, Asn-884, Asn-925, and Asn-926.

This sequence belongs to the glycosyl hydrolase 35 family.

The protein localises to the secreted. It catalyses the reaction Hydrolysis of terminal non-reducing beta-D-galactose residues in beta-D-galactosides.. Cleaves beta-linked terminal galactosyl residues from gangliosides, glycoproteins, and glycosaminoglycans. The sequence is that of Probable beta-galactosidase B (lacB) from Emericella nidulans (strain FGSC A4 / ATCC 38163 / CBS 112.46 / NRRL 194 / M139) (Aspergillus nidulans).